Consider the following 118-residue polypeptide: Myotrophin (118 aa).

The residue at position 2 (C2) is an N-acetylcysteine. The ANK 1 repeat unit spans residues 2-30 (CDKEFMWALKNGDLDEVKDYVAKGEDVNR). N6-acetyllysine occurs at positions 4, 11, and 24. T31 carries the phosphothreonine modification. 2 ANK repeats span residues 34–66 (GGRKPLHYAADCGQLEILEFLLLKGADINAPDK) and 67–99 (HHITPLLSAVYEGHVSCVKLLLSKGADKTVKGP).

The protein belongs to the myotrophin family. Interacts with the heterodimer formed by CAPZA1 and CAPZB. Interacts with RELA.

The protein localises to the cytoplasm. It is found in the nucleus. Its subcellular location is the perinuclear region. In terms of biological role, plays a role in the regulation of the growth of actin filaments. Inhibits the activity of the F-actin-capping protein complex formed by the CAPZA1 and CAPZB heterodimer. Promotes dimerization of NF-kappa-B subunits and regulates NF-kappa-B transcription factor activity. Promotes growth of cardiomyocytes, but not cardiomyocyte proliferation. Promotes cardiac muscle hypertrophy. The polypeptide is Myotrophin (Mtpn) (Rattus norvegicus (Rat)).